The following is a 238-amino-acid chain: Large ribosomal subunit protein uL2 (238 aa).

Residues 201–238 (PFGGGGRQHPGRPKTVSRNTPPGRKVGSIAARRTGVGH) are disordered.

Belongs to the universal ribosomal protein uL2 family. In terms of assembly, part of the 50S ribosomal subunit. Forms a bridge to the 30S subunit in the 70S ribosome.

One of the primary rRNA binding proteins. Required for association of the 30S and 50S subunits to form the 70S ribosome, for tRNA binding and peptide bond formation. It has been suggested to have peptidyltransferase activity; this is somewhat controversial. Makes several contacts with the 16S rRNA in the 70S ribosome. In Methanocella arvoryzae (strain DSM 22066 / NBRC 105507 / MRE50), this protein is Large ribosomal subunit protein uL2.